We begin with the raw amino-acid sequence, 901 residues long: Schlafen family member 11 (901 aa).

Mg(2+) contacts are provided by E209 and E214. Residue K216 is part of the active site. Zn(2+) contacts are provided by H285, C287, C321, and C322. 599–606 (GLPGSGKT) contacts ATP.

This sequence belongs to the Schlafen family. Subgroup III subfamily. As to quaternary structure, homodimer. Interacts with MCM3. Interacts with DHX9. Interacts with RPA1. The cofactor is Mg(2+). Exhibits a wider expression range in ovarian and colon adenocarcinoma than in their corresponding healthy tissues.

The protein localises to the nucleus. It is found in the chromosome. Functionally, inhibitor of DNA replication that promotes cell death in response to DNA damage. Acts as a guardian of the genome by killing cells with defective replication. Persistently blocks stressed replication forks by opening chromatin across replication initiation sites at stressed replication forks, possibly leading to unwind DNA ahead of the MCM helicase and block fork progression, ultimately leading to cell death. Upon DNA damage, inhibits translation of ATR or ATM based on distinct codon usage without disrupting early DNA damage response signaling. Antiviral restriction factor with manganese-dependent type II tRNA endoribonuclease. A single tRNA molecule is bound and cleaved by the SLFN11 dimer. Specifically abrogates the production of retroviruses such as human immunodeficiency virus 1 (HIV-1) by acting as a specific inhibitor of the synthesis of retroviruses encoded proteins in a codon-usage-dependent manner. Impairs the replication of human cytomegalovirus (HCMV) and some Flaviviruses. Exploits the unique viral codon bias towards A/T nucleotides. Also acts as an interferon (IFN)-induced antiviral protein which acts as an inhibitor of retrovirus protein synthesis. This Homo sapiens (Human) protein is Schlafen family member 11.